Consider the following 108-residue polypeptide: Insertion element IS6110 uncharacterized 12.0 kDa protein (108 aa).

It belongs to the transposase 8 family.

The chain is Insertion element IS6110 uncharacterized 12.0 kDa protein from Mycobacterium bovis (strain ATCC BAA-935 / AF2122/97).